The chain runs to 116 residues: Alpha-amylase inhibitor 5 (116 aa).

Cystine bridges form between cysteine 4–cysteine 55, cysteine 18–cysteine 44, cysteine 27–cysteine 77, cysteine 45–cysteine 95, and cysteine 57–cysteine 106.

The protein belongs to the protease inhibitor I6 (cereal trypsin/alpha-amylase inhibitor) family.

Its subcellular location is the secreted. Alpha-amylase inhibitor. In Sorghum bicolor (Sorghum), this protein is Alpha-amylase inhibitor 5.